Here is a 367-residue protein sequence, read N- to C-terminus: 5-amino-6-(D-ribitylamino)uracil--L-tyrosine 4-hydroxyphenyl transferase (367 aa).

The 235-residue stretch at 54–288 (ITYIENWNIN…VYAISRLMFR (235 aa)) folds into the Radical SAM core domain. Residues C68, C72, and C75 each coordinate [4Fe-4S] cluster.

This sequence belongs to the radical SAM superfamily. CofH family. Consists of two subunits, CofG and CofH. Requires [4Fe-4S] cluster as cofactor.

It carries out the reaction 5-amino-6-(D-ribitylamino)uracil + L-tyrosine + S-adenosyl-L-methionine = 5-amino-5-(4-hydroxybenzyl)-6-(D-ribitylimino)-5,6-dihydrouracil + 2-iminoacetate + 5'-deoxyadenosine + L-methionine + H(+). The protein operates within cofactor biosynthesis; coenzyme F0 biosynthesis. Its function is as follows. Catalyzes the radical-mediated synthesis of 5-amino-5-(4-hydroxybenzyl)-6-(D-ribitylimino)-5,6-dihydrouracil from 5-amino-6-(D-ribitylamino)uracil and L-tyrosine. This chain is 5-amino-6-(D-ribitylamino)uracil--L-tyrosine 4-hydroxyphenyl transferase, found in Methanothermobacter thermautotrophicus (strain ATCC 29096 / DSM 1053 / JCM 10044 / NBRC 100330 / Delta H) (Methanobacterium thermoautotrophicum).